A 409-amino-acid polypeptide reads, in one-letter code: Odorant receptor 35a (409 aa).

Residues 1–35 (MVRYVPRFADGQKVKLAWPLAVFRLNHIFWPLDPS) lie on the Cytoplasmic side of the membrane. The helical transmembrane segment at 36–56 (TGKWGRYLDKVLAVAMSLVFM) threads the bilayer. Topologically, residues 57-64 (QHNDAELR) are extracellular. The helical transmembrane segment at 65–85 (YLRFEASNRNLDAFLTGMPTY) threads the bilayer. At 86–139 (LILVEAQFRSLHILLHFEKLQKFLEIFYANIYIDPRKEPEMFRKVDGKMIINRL) the chain is on the cytoplasmic side. The chain crosses the membrane as a helical span at residues 140 to 160 (VSAMYGAVISLYLIAPVFSII). Residue N161 is glycosylated (N-linked (GlcNAc...) asparagine). Residues 161–177 (NQSKDFLYSMIFPFDSD) lie on the Extracellular side of the membrane. The helical transmembrane segment at 178-198 (PLYIFVPLLLTNVWVGIVIDT) threads the bilayer. Over 199-273 (MMFGETNLLC…QQLEAQYTVR (75 aa)) the chain is Cytoplasmic. Residues 274–294 (VFIMFAFAAGLLCALSFKAYT) traverse the membrane as a helical segment. Topologically, residues 295–302 (NPMANYIY) are extracellular. Residues 303–323 (AIWFGAKTVELLSLGQIGSDL) traverse the membrane as a helical segment. Over 324-379 (AFTTDSLSTMYYLTHWEQILQYSTNPSENLRLLKLINLAIEMNSKPFYVTGLKYFR) the chain is Cytoplasmic. A helical transmembrane segment spans residues 380-400 (VSLQAGLKILQASFSYFTFLT). Residues 401–409 (SMQRRQMSN) are Extracellular-facing.

This sequence belongs to the insect chemoreceptor superfamily. Heteromeric odorant receptor channel (TC 1.A.69) family. Or1a subfamily. As to quaternary structure, interacts with Orco. Complexes exist early in the endomembrane system in olfactory sensory neurons (OSNs), coupling these complexes to the conserved ciliary trafficking pathway. Expressed in ac3B olfactory sensory neurons in the antenna.

It localises to the cell membrane. Functionally, odorant receptor which mediates acceptance or avoidance behavior, depending on its substrates. The odorant receptor repertoire encodes a large collection of odor stimuli that vary widely in identity, intensity, and duration. Forms a complex with Orco to form odorant-sensing units, providing sensitive and prolonged odorant signaling and calcium permeability. Involved in the behavioral responses to esters. Involved in the behavioral responses to butanol, pentanol, hexanol, octanol, propyl acetate, and butyl acetate. The chain is Odorant receptor 35a (Or35a) from Drosophila melanogaster (Fruit fly).